A 311-amino-acid chain; its full sequence is Probable deoxyhypusine synthase (311 aa).

Lys284 acts as the Nucleophile in catalysis.

It belongs to the deoxyhypusine synthase family. The cofactor is NAD(+).

It catalyses the reaction [eIF5A protein]-L-lysine + spermidine = [eIF5A protein]-deoxyhypusine + propane-1,3-diamine. The protein operates within protein modification; eIF5A hypusination. Functionally, catalyzes the NAD-dependent oxidative cleavage of spermidine and the subsequent transfer of the butylamine moiety of spermidine to the epsilon-amino group of a specific lysine residue of the eIF-5A precursor protein to form the intermediate deoxyhypusine residue. This is Probable deoxyhypusine synthase from Picrophilus torridus (strain ATCC 700027 / DSM 9790 / JCM 10055 / NBRC 100828 / KAW 2/3).